Reading from the N-terminus, the 293-residue chain is N-acetylneuraminate lyase (293 aa).

Aceneuramate contacts are provided by serine 47, threonine 48, and tyrosine 136. Tyrosine 136 functions as the Proton donor in the catalytic mechanism. Lysine 164 (schiff-base intermediate with substrate) is an active-site residue. Aceneuramate is bound by residues threonine 166, glycine 188, aspartate 190, glutamate 191, serine 207, and tyrosine 251.

It belongs to the DapA family. NanA subfamily. As to quaternary structure, homotetramer.

Its subcellular location is the cytoplasm. It carries out the reaction aceneuramate = aldehydo-N-acetyl-D-mannosamine + pyruvate. Its pathway is amino-sugar metabolism; N-acetylneuraminate degradation; D-fructose 6-phosphate from N-acetylneuraminate: step 1/5. Its function is as follows. Catalyzes the reversible aldol cleavage of N-acetylneuraminic acid (sialic acid; Neu5Ac) to form pyruvate and N-acetylmannosamine (ManNAc) via a Schiff base intermediate. The chain is N-acetylneuraminate lyase from Pasteurella multocida (strain Pm70).